Reading from the N-terminus, the 290-residue chain is Probable proteasome subunit beta type-6 (290 aa).

Belongs to the peptidase T1B family. The 26S proteasome consists of a 20S proteasome core and two 19S regulatory subunits. The 20S proteasome core is composed of 28 subunits that are arranged in four stacked rings, resulting in a barrel-shaped structure. The two end rings are each formed by seven alpha subunits, and the two central rings are each formed by seven beta subunits. The catalytic chamber with the active sites is on the inside of the barrel.

It is found in the cytoplasm. Its subcellular location is the nucleus. Its function is as follows. Non-catalytic component of the proteasome which degrades poly-ubiquitinated proteins in the cytoplasm and in the nucleus. It is essential for the regulated turnover of proteins and for the removal of misfolded proteins. The proteasome is a multicatalytic proteinase complex that is characterized by its ability to cleave peptides with Arg, Phe, Tyr, Leu, and Glu adjacent to the leaving group at neutral or slightly basic pH. It has an ATP-dependent proteolytic activity. The chain is Probable proteasome subunit beta type-6 (PRE7) from Encephalitozoon cuniculi (strain GB-M1) (Microsporidian parasite).